The primary structure comprises 122 residues: MAPQKDKKPKKSTWRFHLDLTHPVEDGIFDSGNFEQFLREKVKVNGKTGNLGNVVHIERLKNKITVVSEKQFSKRYLKYLTKKYLKKNNLRDWLRVVASDKETYELRYFQISQDEDGSESED.

Serine 112, serine 118, and serine 120 each carry phosphoserine.

This sequence belongs to the eukaryotic ribosomal protein eL22 family.

The protein is Ribosomal protein eL22-like 1 (Rpl22l1) of Mus musculus (Mouse).